A 149-amino-acid polypeptide reads, in one-letter code: Chromophore lyase CpcS/CpeS homolog (149 aa).

The protein belongs to the CpcS/CpeS biliprotein lyase family.

The protein localises to the plastid. It localises to the chloroplast. Might function to covalently attach a chromophore to Cys residue(s) of phycobiliproteins. In Porphyra purpurea (Red seaweed), this protein is Chromophore lyase CpcS/CpeS homolog.